The primary structure comprises 390 residues: Transposase for insertion sequence element IS21 (390 aa).

In terms of domain architecture, HTH IS21-type spans Glu-5 to Leu-66. A DNA-binding region (H-T-H motif) is located at residues Ile-20–Lys-39. An Integrase catalytic domain is found at Phe-111–Gln-285.

It belongs to the transposase IS21/IS408/IS1162 family.

Functionally, involved in the transposition of the insertion sequence. The sequence is that of Transposase for insertion sequence element IS21 (istA) from Pseudomonas aeruginosa.